The following is a 582-amino-acid chain: External alternative NADH-ubiquinone oxidoreductase, mitochondrial (582 aa).

The transit peptide at 1–30 (MLRLRPAVRAVSVARSVALTRSLHVSVAKF) directs the protein to the mitochondrion. The tract at residues 46–65 (KQTAGHQGHHQEIPKPDENH) is disordered. A compositionally biased stretch (basic and acidic residues) spans 54–65 (HHQEIPKPDENH). Residue 114–144 (TLVVLGSGWGSVSFLKKLDTSNYNVIVVSPR) participates in FAD binding. 277 to 313 (LHTVVVGGGPTGVEFAAELQDFFEDDLRKWIPDIRDD) lines the NAD(+) pocket. Residues 454 to 501 (LLNGIAKTEDLNNEITNLEKQSEHTFDEQERKNIFAQLESKSRKLRRS) adopt a coiled-coil conformation.

This sequence belongs to the NADH dehydrogenase family. The cofactor is FAD.

The protein localises to the mitochondrion inner membrane. The catalysed reaction is a quinone + NADH + H(+) = a quinol + NAD(+). The enzyme catalyses a ubiquinone + NADH + H(+) = a ubiquinol + NAD(+). Alternative NADH-ubiquinone oxidoreductase which catalyzes the oxidation of mitochondrial NADH does not translocate protons across the inner mitochondrial membrane. In Yarrowia lipolytica (strain CLIB 122 / E 150) (Yeast), this protein is External alternative NADH-ubiquinone oxidoreductase, mitochondrial (NDH2).